The following is a 97-amino-acid chain: MTLREMIDRLLGRQQASATTAKHRLQLVLAHDRSDLNPDLMEQMRREILEVVNRYVELDLEGGDVSLETEERATALVANLPIRRVRDDVLPQVPAVQ.

Belongs to the MinE family.

Functionally, prevents the cell division inhibition by proteins MinC and MinD at internal division sites while permitting inhibition at polar sites. This ensures cell division at the proper site by restricting the formation of a division septum at the midpoint of the long axis of the cell. The sequence is that of Cell division topological specificity factor from Synechococcus sp. (strain RCC307).